A 147-amino-acid chain; its full sequence is MRVVLLASGVLCLLAGQVLSICSPVDYTLYVEKPECDFCVAINTTICMGFCYSLDPNVVGPAVKRLAVQRGCTYQAVEYRTAELPGCPPHVDPRFSYPVALHCTCRACDPARDECTHRASADGDRCSKPLLLHMHAYPGQSNHIQTL.

The signal sequence occupies residues 1 to 20 (MRVVLLASGVLCLLAGQVLS). 6 disulfide bridges follow: cysteine 22/cysteine 72, cysteine 36/cysteine 87, cysteine 39/cysteine 126, cysteine 47/cysteine 103, cysteine 51/cysteine 105, and cysteine 108/cysteine 115. Asparagine 43 carries an N-linked (GlcNAc...) asparagine glycan.

It belongs to the glycoprotein hormones subunit beta family. In terms of assembly, heterodimer of a common alpha chain and a unique beta chain which confers biological specificity to thyrotropin, lutropin, follitropin and gonadotropin.

It localises to the secreted. Its function is as follows. Indispensable for the control of thyroid structure and metabolism. May play some role in the biological processes of the immature fishes. This is Thyrotropin subunit beta (tshb) from Anguilla japonica (Japanese eel).